The chain runs to 797 residues: MGTLGKAREAPRKPSHGCRAASKARLEAKPANSPFPSHPSLAHITQFRMMVSLGHLAKGASLDDLIDSCIQSFDADGNLCRSNQLLQVMLTMHRIVISSAELLQKVITLYKDALAKNSPGLCLKICYFVRYWITEFWVMFKMDASLTDTMEEFQELVKAKGEELHCRLIDTTQINARDWSRKLTQRIKSNTSKKRKVSLLFDHLEPEELSEHLTYLEFKSFRRISFSDYQNYLVNSCVKENPTMERSIALCNGISQWVQLMVLSRPTPQLRAEVFIKFIQVAQKLHQLQNFNTLMAVIGGLCHSSISRLKETSSHVPHEINKVLGEMTELLSSSRNYDNYRRAYGECTDFKIPILGVHLKDLISLYEAMPDYLEDGKVNVHKLLALYNHISELVQLQEVAPPLEANKDLVHLLTLSLDLYYTEDEIYELSYAREPRNHRAPPLTPSKPPVVVDWASGVSPKPDPKTISKHVQRMVDSVFKNYDHDQDGYISQEEFEKIAASFPFSFCVMDKDREGLISRDEITAYFMRASSIYSKLGLGFPHNFQETTYLKPTFCDNCAGFLWGVIKQGYRCKDCGMNCHKQCKDLVVFECKKRAKNPVAPTENNTSVGPVSNLCSLGAKDLLHAPEEGPFTFPNGEAVEHGEESKDRTIMLMGVSSQKISLRLKRAVAHKATQTESQPWIGSEGPSGPFVLSSPRKTAQDTLYVLPSPTSPCPSPVLVRKRAFVKWENKDSLIKSKEELRHLRLPTYQELEQEINTLKADNDALKIQLKYAQKKIESLQLEKSNHVLAQMEQGDCS.

Residues 1-12 show a composition bias toward basic and acidic residues; the sequence is MGTLGKAREAPR. The tract at residues 1-23 is disordered; sequence MGTLGKAREAPRKPSHGCRAASK. An N-terminal Ras-GEF domain is found at 53-176; sequence LGHLAKGASL…RLIDTTQINA (124 aa). The tract at residues 57 to 110 is ras exchanger motif region; required for transforming activity; sequence AKGASLDDLIDSCIQSFDADGNLCRSNQLLQVMLTMHRIVISSAELLQKVITLY. Phosphothreonine; by PKC is present on T184. Residues 205 to 436 form the Ras-GEF domain; the sequence is EPEELSEHLT…YELSYAREPR (232 aa). 2 consecutive EF-hand domains span residues 470-505 and 506-532; these read HVQR…FPFS and FCVM…ASSI. Residues D483, D485, D487, Y489, and E494 each contribute to the Ca(2+) site. A Phorbol-ester/DAG-type zinc finger spans residues 541–591; the sequence is PHNFQETTYLKPTFCDNCAGFLWGVIKQGYRCKDCGMNCHKQCKDLVVFEC. Residues 673-694 form a disordered region; the sequence is TQTESQPWIGSEGPSGPFVLSS. Residues 686–694 are suppress the PT region-mediated translocation to plasma membrane; sequence PSGPFVLSS. Residues 718 to 797 are PT region; mediates the BCR-dependent translocation to plasma membrane; that stretch reads LVRKRAFVKW…LAQMEQGDCS (80 aa). Residues 746–786 adopt a coiled-coil conformation; the sequence is PTYQELEQEINTLKADNDALKIQLKYAQKKIESLQLEKSNH.

The protein belongs to the RASGRP family. As to quaternary structure, homodimer. Forms a signaling complex with DGKZ and HRAS. Interacts with F-actin. Interacts with SKAP1. Expressed in brain with higher expression in cerebellum, cerebral cortex and amygdala. Expressed in the hematopoietic system. Expressed in T-cells (at protein level). Expressed in NK cells (at protein level).

The protein resides in the cytoplasm. It localises to the cytosol. The protein localises to the cell membrane. Its subcellular location is the golgi apparatus membrane. It is found in the endoplasmic reticulum membrane. With respect to regulation, autoinhibited. Activated by diacylglycerol and calcium binding, which induces a conformational change releasing the autoinhibitory state. Regulated by DGKA. Regulated by DGKZ. Regulated by PLC gamma and F-actin polymerization. Its function is as follows. Functions as a calcium- and diacylglycerol (DAG)-regulated nucleotide exchange factor specifically activating Ras through the exchange of bound GDP for GTP. Activates the Erk/MAP kinase cascade. Regulates T-cell/B-cell development, homeostasis and differentiation by coupling T-lymphocyte/B-lymphocyte antigen receptors to Ras. Regulates NK cell cytotoxicity and ITAM-dependent cytokine production by activation of Ras-mediated ERK and JNK pathways. Functions in mast cell degranulation and cytokine secretion, regulating FcERI-evoked allergic responses. May also function in differentiation of other cell types. The protein is RAS guanyl-releasing protein 1 (RASGRP1) of Homo sapiens (Human).